We begin with the raw amino-acid sequence, 95 residues long: MGRSTKKGPFVDPKLLKKIKQLNEAGEKKIIKTWSRASMIVPEMVGHTIAVYNGLKHIPVYITENMVGHRLGEFSFTRRFGGHADKSASKGQVKK.

The protein belongs to the universal ribosomal protein uS19 family.

Protein S19 forms a complex with S13 that binds strongly to the 16S ribosomal RNA. This is Small ribosomal subunit protein uS19 from Thermosipho melanesiensis (strain DSM 12029 / CIP 104789 / BI429).